A 255-amino-acid chain; its full sequence is MNINKIALIYNHNSKHLAIIEEIKKLYNYCKIEEAEVIIVIGGDGELLHNIHRYMHLNIPFYGVNLGNLGFLMNPLDTKKLLQNIHESTVSILNPLLMQVEDTSGQIYTALAINEVSIFRKTNQAAKFRIEVNGIERMSELVADGALVATPAGSSAYNLSASGPILPLESNMLCLTPICSFRPRRWHGALLLSSATIKFEILNTNKRPVNATADFQEFNNITNVTVKSTKDKPVKLLFNKNHTLEDRIIKEQFGG.

Asp-44 (proton acceptor) is an active-site residue. NAD(+) is bound by residues 44-45 (DG), His-49, 114-115 (NE), Asp-144, Ala-152, 155-160 (SAYNLS), and Gln-216.

Belongs to the NAD kinase family. It depends on a divalent metal cation as a cofactor.

It is found in the cytoplasm. The catalysed reaction is NAD(+) + ATP = ADP + NADP(+) + H(+). Involved in the regulation of the intracellular balance of NAD and NADP, and is a key enzyme in the biosynthesis of NADP. Catalyzes specifically the phosphorylation on 2'-hydroxyl of the adenosine moiety of NAD to yield NADP. The protein is NAD kinase of Rickettsia peacockii (strain Rustic).